The sequence spans 35 residues: MEALVYTFLLVSTLGIIFFAIFFREPPKVPNKKMK.

Residues 3 to 23 traverse the membrane as a helical segment; sequence ALVYTFLLVSTLGIIFFAIFF.

Belongs to the PsbT family. As to quaternary structure, PSII is composed of 1 copy each of membrane proteins PsbA, PsbB, PsbC, PsbD, PsbE, PsbF, PsbH, PsbI, PsbJ, PsbK, PsbL, PsbM, PsbT, PsbY, PsbZ, Psb30/Ycf12, at least 3 peripheral proteins of the oxygen-evolving complex and a large number of cofactors. It forms dimeric complexes.

The protein resides in the plastid. It localises to the chloroplast thylakoid membrane. Found at the monomer-monomer interface of the photosystem II (PS II) dimer, plays a role in assembly and dimerization of PSII. PSII is a light-driven water plastoquinone oxidoreductase, using light energy to abstract electrons from H(2)O, generating a proton gradient subsequently used for ATP formation. The sequence is that of Photosystem II reaction center protein T from Schisandra chinensis (Chinese magnolia vine).